Consider the following 688-residue polypeptide: PR domain zinc finger protein 8 (688 aa).

Positions 16 to 131 constitute an SET domain; that stretch reads KAVQQCLTDI…KDEELLVWYG (116 aa). Tyrosine 130 contributes to the S-adenosyl-L-methionine binding site. The segment at 154-182 adopts a C2H2-type 1 zinc-finger fold; it reads YTCLECSQRFQFEFPYVAHLRFRCPKRLH. Disordered stretches follow at residues 184–309 and 397–506; these read TDAN…GCKG and EEAA…PARS. Residues 192 to 208 show a composition bias toward gly residues; sequence QGGGLGTKDHGGGGGGK. Low complexity-rich tracts occupy residues 209–219 and 275–284; these read EQQQQQQQQQQ and GSSSCVAAPG. 2 stretches are compositionally biased toward gly residues: residues 414 to 424 and 470 to 489; these read AGGGVAGGGSN and LGGG…GGGQ. C2H2-type zinc fingers lie at residues 624–647 and 665–687; these read NWCA…RSHH and LKCP…MTSH.

Belongs to the class V-like SAM-binding methyltransferase superfamily. As to quaternary structure, interacts with BHLHE22. Interacts with EPM2A and NHLRC1. This interaction sequesters EPM2A and NHLRC1 to the nucleus. As to expression, expressed in brain, heart, liver, testes, retina. Highest expression is observed in the retina and hippocampus; moderately expressed in the cortex and cerebellum. In the retina, it is expressed in bipolar and amacrine cells.

It is found in the nucleus. Functionally, probable histone methyltransferase, preferentially acting on 'Lys-9' of histone H3. Histone methyltransferase activity has not been confirmed in other species. Involved in the control of steroidogenesis through transcriptional repression of steroidogenesis marker genes such as CYP17A1 and LHCGR. Forms with BHLHE22 a transcriptional repressor complex controlling genes involved in neural development and neuronal differentiation. In the retina, it is required for rod bipolar and type 2 OFF-cone bipolar cell survival. In Mus musculus (Mouse), this protein is PR domain zinc finger protein 8 (Prdm8).